Here is a 156-residue protein sequence, read N- to C-terminus: Probable succinate transporter subunit YjjB (156 aa).

Transmembrane regions (helical) follow at residues 7-27, 54-74, 86-106, and 128-148; these read WALL…AMVF, FGMD…MIGI, VFTV…TAMI, and FLKA…PGLW.

The protein belongs to the ThrE exporter (TC 2.A.79) family. The transporter is composed of YjjB and YjjP.

The protein localises to the cell inner membrane. Its function is as follows. Involved in succinate export with YjjP. Both proteins are required for export. The polypeptide is Probable succinate transporter subunit YjjB (Yersinia enterocolitica serotype O:8 / biotype 1B (strain NCTC 13174 / 8081)).